A 231-amino-acid polypeptide reads, in one-letter code: Ribosyldihydronicotinamide dehydrogenase [quinone] (231 aa).

Residues His-12, 18–21 (FNGS), and 104–107 (LYWF) contribute to the FAD site. 127–129 (FDV) is a binding site for substrate. Residues 148-151 (TTGG) and Tyr-156 contribute to the FAD site. 2 residues coordinate Zn(2+): His-174 and His-178. Glu-194 provides a ligand contact to FAD. Ser-197 carries the post-translational modification Phosphoserine. Arg-201 is a binding site for FAD. Residue Cys-223 participates in Zn(2+) binding.

The protein belongs to the NAD(P)H dehydrogenase (quinone) family. Homodimer. It depends on Zn(2+) as a cofactor. FAD is required as a cofactor.

It localises to the cytoplasm. It carries out the reaction 1-(beta-D-ribofuranosyl)-1,4-dihydronicotinamide + a quinone + H(+) = beta-nicotinamide D-riboside + a quinol. In terms of biological role, the enzyme apparently serves as a quinone reductase in connection with conjugation reactions of hydroquinones involved in detoxification pathways as well as in biosynthetic processes such as the vitamin K-dependent gamma-carboxylation of glutamate residues in prothrombin synthesis. The protein is Ribosyldihydronicotinamide dehydrogenase [quinone] (Nqo2) of Rattus norvegicus (Rat).